The chain runs to 285 residues: Glutamate racemase (285 aa).

Residues 28–29 (DS) and 60–61 (YG) each bind substrate. The active-site Proton donor/acceptor is the cysteine 92. Substrate is bound at residue 93 to 94 (NT). UDP-N-acetyl-alpha-D-muramoyl-L-alanine-binding positions include arginine 104 and 113–119 (GVVPAIK). Cysteine 204 acts as the Proton donor/acceptor in catalysis. 205–206 (TH) serves as a coordination point for substrate.

Belongs to the aspartate/glutamate racemases family. In terms of assembly, monomer.

The enzyme catalyses L-glutamate = D-glutamate. It functions in the pathway cell wall biogenesis; peptidoglycan biosynthesis. Its activity is regulated as follows. The low basal catalytic activity in increased 1000-fold in the presence of UDP-MurNAc-L-Ala, the product of the preceding enzyme in the peptidoglycan biosynthesis. Its function is as follows. Provides the (R)-glutamate required for cell wall biosynthesis. The chain is Glutamate racemase from Escherichia coli (strain K12).